Here is a 425-residue protein sequence, read N- to C-terminus: Potassium/proton antiporter CemA (425 aa).

Residues 89 to 109 (LFLTTVKCLFILLFVPLGINF) form a helical membrane-spanning segment. Positions 159 to 278 (LSENQIFFGL…KTDFASVFRT (120 aa)) are insert. Positions 173 to 192 (STFPSSEKSQKSEHFSNQDE) are disordered. A compositionally biased stretch (basic and acidic residues) spans 180 to 192 (KSQKSEHFSNQDE). 3 helical membrane passes run 300–320 (IEAI…CYLL), 350–370 (ILFI…ELFF), and 386–406 (IFLL…YLIF).

This sequence belongs to the CemA family.

The protein resides in the plastid. It is found in the chloroplast inner membrane. It catalyses the reaction K(+)(in) + H(+)(out) = K(+)(out) + H(+)(in). Its function is as follows. Contributes to K(+)/H(+) antiport activity by supporting proton efflux to control proton extrusion and homeostasis in chloroplasts in a light-dependent manner to modulate photosynthesis. Prevents excessive induction of non-photochemical quenching (NPQ) under continuous-light conditions. Indirectly promotes efficient inorganic carbon uptake into chloroplasts. This chain is Potassium/proton antiporter CemA, found in Tetradesmus obliquus (Green alga).